The chain runs to 249 residues: Aquaporin TIP4-3 (249 aa).

2 helical membrane-spanning segments follow: residues 20-40 (GVLG…GAAM) and 56-76 (TAVA…GFHI). Positions 82-84 (NPA) match the NPA 1 motif. The next 3 membrane-spanning stretches (helical) occupy residues 100-122 (SSLY…RWLT), 141-161 (GVVA…ATIL), and 169-189 (GAGP…GAAL). An NPA 2 motif is present at residues 195–197 (NPA). The chain crosses the membrane as a helical span at residues 214–234 (VYWVGPLAGGPLAVLVYECCF).

It belongs to the MIP/aquaporin (TC 1.A.8) family. TIP (TC 1.A.8.10) subfamily.

Its subcellular location is the vacuole membrane. Functionally, aquaporins facilitate the transport of water and small neutral solutes across cell membranes. The polypeptide is Aquaporin TIP4-3 (TIP4-3) (Zea mays (Maize)).